The sequence spans 111 residues: Large ribosomal subunit protein uL22 (111 aa).

The protein belongs to the universal ribosomal protein uL22 family. Part of the 50S ribosomal subunit.

Its function is as follows. This protein binds specifically to 23S rRNA; its binding is stimulated by other ribosomal proteins, e.g. L4, L17, and L20. It is important during the early stages of 50S assembly. It makes multiple contacts with different domains of the 23S rRNA in the assembled 50S subunit and ribosome. Functionally, the globular domain of the protein is located near the polypeptide exit tunnel on the outside of the subunit, while an extended beta-hairpin is found that lines the wall of the exit tunnel in the center of the 70S ribosome. This chain is Large ribosomal subunit protein uL22, found in Chlamydia pneumoniae (Chlamydophila pneumoniae).